A 293-amino-acid polypeptide reads, in one-letter code: DNA-directed RNA polymerase III subunit RPC6 (293 aa).

The protein belongs to the eukaryotic RPC34/RPC39 RNA polymerase subunit family. Component of the RNA polymerase III (Pol III) complex consisting of 17 subunits.

It is found in the nucleus. Its function is as follows. DNA-dependent RNA polymerase catalyzes the transcription of DNA into RNA using the four ribonucleoside triphosphates as substrates. Specific peripheric component of RNA polymerase III which synthesizes small RNAs, such as 5S rRNA and tRNAs. This Drosophila melanogaster (Fruit fly) protein is DNA-directed RNA polymerase III subunit RPC6.